A 331-amino-acid chain; its full sequence is UPF0194 membrane protein CKO_02332 (331 aa).

The N-terminal stretch at 1 to 15 (MKKPVVIALAVAALA) is a signal peptide. Residues 142 to 207 (ISANDLENAR…ELDLQDTTLI (66 aa)) adopt a coiled-coil conformation.

Belongs to the UPF0194 family.

The protein localises to the periplasm. The chain is UPF0194 membrane protein CKO_02332 from Citrobacter koseri (strain ATCC BAA-895 / CDC 4225-83 / SGSC4696).